Reading from the N-terminus, the 479-residue chain is Ribosomal lysine N-methyltransferase 2 (479 aa).

The region spanning 22-325 (PNISICESPE…INEELFLNYG (304 aa)) is the SET domain. Tyr-324 lines the S-adenosyl-L-methionine pocket.

It belongs to the class V-like SAM-binding methyltransferase superfamily. RKM2 family.

S-adenosyl-L-methionine-dependent protein-lysine N-methyltransferase that trimethylates 60S ribosomal protein L12 (RPL12A and RPL12B) at 'Lys-4' and 'Lys-11'. The sequence is that of Ribosomal lysine N-methyltransferase 2 from Saccharomyces cerevisiae (strain ATCC 204508 / S288c) (Baker's yeast).